A 264-amino-acid chain; its full sequence is 3-methyl-2-oxobutanoate hydroxymethyltransferase (264 aa).

The Mg(2+) site is built by Asp45 and Asp84. 3-methyl-2-oxobutanoate is bound by residues 45–46 (DS), Asp84, and Lys112. Residue Glu114 coordinates Mg(2+). Glu181 (proton acceptor) is an active-site residue.

It belongs to the PanB family. Homodecamer; pentamer of dimers. Requires Mg(2+) as cofactor.

It localises to the cytoplasm. It catalyses the reaction 3-methyl-2-oxobutanoate + (6R)-5,10-methylene-5,6,7,8-tetrahydrofolate + H2O = 2-dehydropantoate + (6S)-5,6,7,8-tetrahydrofolate. It functions in the pathway cofactor biosynthesis; (R)-pantothenate biosynthesis; (R)-pantoate from 3-methyl-2-oxobutanoate: step 1/2. Functionally, catalyzes the reversible reaction in which hydroxymethyl group from 5,10-methylenetetrahydrofolate is transferred onto alpha-ketoisovalerate to form ketopantoate. The chain is 3-methyl-2-oxobutanoate hydroxymethyltransferase from Shigella sonnei (strain Ss046).